The sequence spans 146 residues: Vascular endothelial growth factor A (146 aa).

An N-terminal signal peptide occupies residues 1-26; sequence MNFLLSWVHWSLALLLYLHHAKWSQA. Cystine bridges form between Cys-51-Cys-93, Cys-82-Cys-127, and Cys-86-Cys-129. Asn-100 carries an N-linked (GlcNAc...) asparagine glycan.

This sequence belongs to the PDGF/VEGF growth factor family. In terms of assembly, homodimer; disulfide-linked. Also found as heterodimer with PGF. Interacts with NRP1. Interacts with isoform 2 of BSG. Interacts with CD82; this interaction inhibits VEGFA-mediated signaling pathway.

Functionally, growth factor active in angiogenesis, vasculogenesis and endothelial cell growth. Induces endothelial cell proliferation, promotes cell migration, inhibits apoptosis and induces permeabilization of blood vessels. Binds to the FLT1/VEGFR1 and KDR/VEGFR2 receptors, heparan sulfate and heparin. Binding to NRP1 receptor initiates a signaling pathway needed for motor neuron axon guidance and cell body migration, including for the caudal migration of facial motor neurons from rhombomere 4 to rhombomere 6 during embryonic development. Also binds the DEAR/FBXW7-AS1 receptor. The polypeptide is Vascular endothelial growth factor A (VEGFA) (Ovis aries (Sheep)).